A 299-amino-acid polypeptide reads, in one-letter code: GTPase Era (299 aa).

In terms of domain architecture, Era-type G spans 5–175 (RSGFVCFVGR…TNVLVSQLPP (171 aa)). The tract at residues 13–20 (GRPNTGKS) is G1. Residue 13–20 (GRPNTGKS) participates in GTP binding. A G2 region spans residues 39-43 (QTTRH). Residues 60–63 (DTPG) are G3. Residues 60–64 (DTPGL) and 124–127 (TKID) each bind GTP. Residues 124-127 (TKID) form a G4 region. Residues 154–156 (VSA) are G5. One can recognise a KH type-2 domain in the interval 206-285 (VRDELPHSLA…YLDLRVKIAK (80 aa)).

The protein belongs to the TRAFAC class TrmE-Era-EngA-EngB-Septin-like GTPase superfamily. Era GTPase family. In terms of assembly, monomer. Stays in the monomer conformation, irrespective of the presence of GTP.

The protein resides in the cell envelope. Its subcellular location is the secreted. The protein localises to the cell wall. Its activity is regulated as follows. Co-purified with RNA upon overexpression in E.coli, but RNAs do not appear to influence the GTPase activity. Functionally, exhibits GTPase activity. Binds RNA but is probably not involved in ribosome assembly in mycobacteria. Cannot use ATP. This is GTPase Era from Mycolicibacterium smegmatis (strain ATCC 700084 / mc(2)155) (Mycobacterium smegmatis).